The chain runs to 277 residues: Large ribosomal subunit protein uL2 (277 aa).

A disordered region spans residues 223-264 (VAMNPVDHPHGGGEGKTAAGRHPVSPWGTPSKGSRTRRNKRT).

It belongs to the universal ribosomal protein uL2 family. As to quaternary structure, part of the 50S ribosomal subunit. Forms a bridge to the 30S subunit in the 70S ribosome.

One of the primary rRNA binding proteins. Required for association of the 30S and 50S subunits to form the 70S ribosome, for tRNA binding and peptide bond formation. It has been suggested to have peptidyltransferase activity; this is somewhat controversial. Makes several contacts with the 16S rRNA in the 70S ribosome. This Nitrosomonas eutropha (strain DSM 101675 / C91 / Nm57) protein is Large ribosomal subunit protein uL2.